We begin with the raw amino-acid sequence, 237 residues long: Ribonuclease PH (237 aa).

Residues arginine 86 and 124 to 126 (GTR) each bind phosphate.

Belongs to the RNase PH family. As to quaternary structure, homohexameric ring arranged as a trimer of dimers.

It catalyses the reaction tRNA(n+1) + phosphate = tRNA(n) + a ribonucleoside 5'-diphosphate. In terms of biological role, phosphorolytic 3'-5' exoribonuclease that plays an important role in tRNA 3'-end maturation. Removes nucleotide residues following the 3'-CCA terminus of tRNAs; can also add nucleotides to the ends of RNA molecules by using nucleoside diphosphates as substrates, but this may not be physiologically important. Probably plays a role in initiation of 16S rRNA degradation (leading to ribosome degradation) during starvation. The chain is Ribonuclease PH from Cereibacter sphaeroides (strain ATCC 17029 / ATH 2.4.9) (Rhodobacter sphaeroides).